We begin with the raw amino-acid sequence, 236 residues long: Dual specificity protein phosphatase 15 (236 aa).

G2 is lipidated: N-myristoyl glycine. The Tyrosine-protein phosphatase domain occupies G4 to Q144. The active-site Phosphocysteine intermediate is the C88. The disordered stretch occupies residues G178 to L213. The segment covering T181 to S194 has biased composition (low complexity).

The protein belongs to the protein-tyrosine phosphatase family. Non-receptor class dual specificity subfamily.

Its subcellular location is the cell membrane. It carries out the reaction O-phospho-L-tyrosyl-[protein] + H2O = L-tyrosyl-[protein] + phosphate. It catalyses the reaction O-phospho-L-seryl-[protein] + H2O = L-seryl-[protein] + phosphate. The catalysed reaction is O-phospho-L-threonyl-[protein] + H2O = L-threonyl-[protein] + phosphate. Its function is as follows. May play a role in the regulation of oligodendrocyte differentiation. May play a role in the regulation of myelin formation. Involved in the regulation of Erk1/2 phosphorylation in Schwann cells; the signaling may be linked to the regulation of myelination. May dephosphorylate MAPK13, ATF2, ERBB3, PDGFRB and SNX6. The sequence is that of Dual specificity protein phosphatase 15 (Dusp15) from Rattus norvegicus (Rat).